The sequence spans 94 residues: Acylphosphatase (94 aa).

Residues 8-94 (RFTARVVGRV…QGDLADFRRK (87 aa)) form the Acylphosphatase-like domain. Catalysis depends on residues R23 and N41.

This sequence belongs to the acylphosphatase family.

The catalysed reaction is an acyl phosphate + H2O = a carboxylate + phosphate + H(+). The polypeptide is Acylphosphatase (acyP) (Frankia alni (strain DSM 45986 / CECT 9034 / ACN14a)).